A 421-amino-acid chain; its full sequence is Glycosaminoglycan xylosylkinase homolog (421 aa).

A signal peptide spans 1 to 21 (MNKRSVIIAGIVASLLGLALG). Asn-83 is a glycosylation site (N-linked (GlcNAc...) asparagine). Gln-131 and Lys-147 together coordinate ATP. Asp-166 is a Mn(2+) binding site. Cystine bridges form between Cys-225–Cys-240 and Cys-230–Cys-233. 252 to 255 (IYIV) is an ATP binding site. 2 disulfide bridges follow: Cys-285–Cys-351 and Cys-352–Cys-409. Asp-314 is a catalytic residue. ATP contacts are provided by Glu-319 and Asp-329. Residue Asp-329 coordinates Mn(2+).

This sequence belongs to the FAM20 family. The cofactor is Mn(2+).

The protein localises to the golgi apparatus. The protein resides in the endoplasmic reticulum. The catalysed reaction is 3-O-(beta-D-galactosyl-(1-&gt;3)-beta-D-galactosyl-(1-&gt;4)-beta-D-xylosyl)-L-seryl-[protein] + ATP = 3-O-(beta-D-galactosyl-(1-&gt;3)-beta-D-galactosyl-(1-&gt;4)-beta-D-2-O-phosphoxylosyl)-L-seryl-[protein] + ADP + H(+). In terms of biological role, kylose kinase that mediates the 2-O-phosphorylation of xylose in the glycosaminoglycan-protein linkage region of proteoglycans. This chain is Glycosaminoglycan xylosylkinase homolog, found in Drosophila melanogaster (Fruit fly).